The chain runs to 91 residues: UPF0250 protein PputW619_0619 (91 aa).

The protein belongs to the UPF0250 family.

In Pseudomonas putida (strain W619), this protein is UPF0250 protein PputW619_0619.